A 185-amino-acid polypeptide reads, in one-letter code: Elongation factor P (185 aa).

This sequence belongs to the elongation factor P family.

The protein localises to the cytoplasm. It functions in the pathway protein biosynthesis; polypeptide chain elongation. Functionally, involved in peptide bond synthesis. Stimulates efficient translation and peptide-bond synthesis on native or reconstituted 70S ribosomes in vitro. Probably functions indirectly by altering the affinity of the ribosome for aminoacyl-tRNA, thus increasing their reactivity as acceptors for peptidyl transferase. This is Elongation factor P from Bacillus cereus (strain ATCC 10987 / NRS 248).